The chain runs to 248 residues: Ribonuclease 3 (248 aa).

The RNase III domain occupies 6-136; that stretch reads LAYLQTLIGS…LIGAIYLDKG (131 aa). Glutamate 49 lines the Mg(2+) pocket. Aspartate 53 is an active-site residue. Residues aspartate 122 and glutamate 125 each contribute to the Mg(2+) site. Glutamate 125 is a catalytic residue. In terms of domain architecture, DRBM spans 163-231; it reads NYKSCLIEYS…AKEAMERIIA (69 aa).

The protein belongs to the ribonuclease III family. As to quaternary structure, homodimer. It depends on Mg(2+) as a cofactor.

The protein localises to the cytoplasm. It carries out the reaction Endonucleolytic cleavage to 5'-phosphomonoester.. In terms of biological role, digests double-stranded RNA. Involved in the processing of primary rRNA transcript to yield the immediate precursors to the large and small rRNAs (23S and 16S). Processes some mRNAs, and tRNAs when they are encoded in the rRNA operon. Processes pre-crRNA and tracrRNA of type II CRISPR loci if present in the organism. This is Ribonuclease 3 from Chlorobium chlorochromatii (strain CaD3).